A 69-amino-acid chain; its full sequence is Brevinin-1CG1 (69 aa).

Positions 1–22 are cleaved as a signal peptide; the sequence is MFTMKKSLLLLFFLGTINLSLC. A propeptide spans 23–43 (removed in mature form); it reads EQERNAEEERRDDDEMDVEVE. An intrachain disulfide couples Cys63 to Cys69.

In terms of tissue distribution, expressed by the skin glands.

It localises to the secreted. In terms of biological role, antimicrobial peptide. Active against Gram-positive bacteria R.rhodochrous X15 and B.licheniformis X39 and against Gram-negative bacterium E.coli ATCC 25922. Has antifungal activity against a slime mold isolate. Has weak hemolytic activity against human erythrocytes. In Amolops chunganensis (Chungan torrent frog), this protein is Brevinin-1CG1.